The primary structure comprises 235 residues: Probable deoxycytidine kinase FPV151 (235 aa).

Residue 30 to 38 (GNISAGKST) coordinates ATP. Substrate-binding residues include glutamate 53, tyrosine 68, and glutamine 79. Glutamate 104 (proton acceptor) is an active-site residue. Substrate-binding residues include arginine 105, aspartate 110, and glutamate 172.

It belongs to the DCK/DGK family.

It carries out the reaction 2'-deoxycytidine + a ribonucleoside 5'-triphosphate = dCMP + a ribonucleoside 5'-diphosphate + H(+). This Vertebrata (FPV) protein is Probable deoxycytidine kinase FPV151.